Consider the following 62-residue polypeptide: Large ribosomal subunit protein eL37 (62 aa).

Zn(2+) contacts are provided by cysteine 20, cysteine 23, cysteine 35, and cysteine 38. The C4-type zinc finger occupies 20-38 (CRRCGRHSFNVAKGYCAAC).

This sequence belongs to the eukaryotic ribosomal protein eL37 family. It depends on Zn(2+) as a cofactor.

Functionally, binds to the 23S rRNA. The sequence is that of Large ribosomal subunit protein eL37 from Desulfurococcus amylolyticus (strain DSM 18924 / JCM 16383 / VKM B-2413 / 1221n) (Desulfurococcus kamchatkensis).